A 293-amino-acid chain; its full sequence is tRNA pseudouridine synthase B (293 aa).

Residue D39 is the Nucleophile of the active site.

It belongs to the pseudouridine synthase TruB family. Type 1 subfamily.

It catalyses the reaction uridine(55) in tRNA = pseudouridine(55) in tRNA. Functionally, responsible for synthesis of pseudouridine from uracil-55 in the psi GC loop of transfer RNAs. In Streptococcus thermophilus (strain ATCC BAA-250 / LMG 18311), this protein is tRNA pseudouridine synthase B.